The sequence spans 296 residues: Release factor glutamine methyltransferase (296 aa).

S-adenosyl-L-methionine contacts are provided by residues 133–137 (GTGSG), D156, and N201. 201–204 (NPPY) serves as a coordination point for substrate.

The protein belongs to the protein N5-glutamine methyltransferase family. PrmC subfamily.

The catalysed reaction is L-glutaminyl-[peptide chain release factor] + S-adenosyl-L-methionine = N(5)-methyl-L-glutaminyl-[peptide chain release factor] + S-adenosyl-L-homocysteine + H(+). Methylates the class 1 translation termination release factors RF1/PrfA and RF2/PrfB on the glutamine residue of the universally conserved GGQ motif. The polypeptide is Release factor glutamine methyltransferase (Rhodopirellula baltica (strain DSM 10527 / NCIMB 13988 / SH1)).